A 582-amino-acid polypeptide reads, in one-letter code: mRNA-decapping enzyme 1A (582 aa).

The residue at position 62 (Ser62) is a Phosphoserine. A compositionally biased stretch (basic and acidic residues) spans 132-141; it reads RSQQAARDKQ. Disordered regions lie at residues 132–154 and 172–214; these read RSQQ…DHRP and QMGD…PSGH. Phosphoserine is present on residues Ser142, Ser179, Ser180, Ser315, Ser319, and Ser334. Residues 173–196 are compositionally biased toward polar residues; sequence MGDSNISSPGLQPSTQLSNLGSTE. The residue at position 348 (Thr348) is a Phosphothreonine. At Ser353 the chain carries Phosphoserine. Arg376 carries the post-translational modification Asymmetric dimethylarginine. Position 401 is a phosphothreonine (Thr401). A phosphoserine mark is found at Ser422, Ser522, Ser523, and Ser525. The interval 513–536 is disordered; the sequence is RSSDLERKASSPSPLTIGTPESQR. Polar residues predominate over residues 522–533; that stretch reads SSPSPLTIGTPE. Residues Thr528 and Thr531 each carry the phosphothreonine modification.

It belongs to the DCP1 family. In terms of assembly, (Microbial infection) Interacts with rotavirus A non-structural protein 2; this interaction probably plays a role in the sequestration of DCP1A in viral factories. Interacts with rotavirus A non-structural protein 5; this interaction probably plays a role in its sequestration in viral factories. Forms a complex with EDC3, DCP2, DDX6 and EDC4/HEDLS, within this complex directly interacts with EDC3. Part of a cytoplasmic complex containing proteins involved in mRNA decay, including XRN1 and LSM1. Interacts with DCP1B. Interacts with DCP2. Interacts with DDX17 in an RNA-independent manner. Interacts with PNRC2. Interacts with SMAD4. Interacts with UPF1. Interacts with ZC3HAV1. Interacts with ZFP36L1. Interacts with NBDY. Interacts with DHX34; the interaction is RNA-independent. Detected in heart, brain, placenta, lung, skeletal muscle, liver, kidney and pancreas.

Its subcellular location is the cytoplasm. The protein resides in the P-body. It is found in the nucleus. The catalysed reaction is a 5'-end (N(7)-methyl 5'-triphosphoguanosine)-ribonucleoside in mRNA + H2O = N(7)-methyl-GDP + a 5'-end phospho-ribonucleoside in mRNA + 2 H(+). Its function is as follows. Necessary for the degradation of mRNAs, both in normal mRNA turnover and in nonsense-mediated mRNA decay. Removes the 7-methyl guanine cap structure from mRNA molecules, yielding a 5'-phosphorylated mRNA fragment and 7m-GDP. Contributes to the transactivation of target genes after stimulation by TGFB1. Essential for embryonic development. The protein is mRNA-decapping enzyme 1A (DCP1A) of Homo sapiens (Human).